Reading from the N-terminus, the 121-residue chain is MKISSKQPRKQRKFLYNAPLHVRQKLMSAPLSRELREKYKVRNLPVRVGDKVRIMRGDYKGHEGKVVEVDLKRYRIYVEGATLRKTNGTEVFYPIHPSNVMIIELNLEDEKRKKIIERRAG.

The protein belongs to the universal ribosomal protein uL24 family. As to quaternary structure, part of the 50S ribosomal subunit.

Its function is as follows. One of two assembly initiator proteins, it binds directly to the 5'-end of the 23S rRNA, where it nucleates assembly of the 50S subunit. Located at the polypeptide exit tunnel on the outside of the subunit. This chain is Large ribosomal subunit protein uL24, found in Pyrococcus furiosus (strain ATCC 43587 / DSM 3638 / JCM 8422 / Vc1).